We begin with the raw amino-acid sequence, 94 residues long: Putative testis-specific prion protein (94 aa).

Positions 1 to 18 are cleaved as a signal peptide; it reads MQHSLVFFFAVILHLSHL. Asn-44 carries N-linked (GlcNAc...) asparagine glycosylation.

Specifically expressed in adult testis.

It localises to the secreted. This Homo sapiens (Human) protein is Putative testis-specific prion protein (PRNT).